The primary structure comprises 317 residues: Anamorsin homolog (317 aa).

Residues 1–192 (MREVLVVSES…ITGVRPNWKA (192 aa)) are N-terminal SAM-like domain. A linker region spans residues 193–216 (KGDRKSSSIHAAPIDGYISKAPDY). Residues cysteine 219, cysteine 226, cysteine 229, and cysteine 231 each contribute to the [2Fe-2S] cluster site. Residues 219–231 (CSTKPRACANCTC) are fe-S binding site A. [4Fe-4S] cluster contacts are provided by cysteine 286, cysteine 289, cysteine 297, and cysteine 300. 2 short sequence motifs (cx2C motif) span residues 286–289 (CGNC) and 297–300 (CDSC). Positions 286 to 300 (CGNCYLGDAFRCDSC) are fe-S binding site B.

Belongs to the anamorsin family. In terms of assembly, monomer. The cofactor is [2Fe-2S] cluster. [4Fe-4S] cluster is required as a cofactor.

Its subcellular location is the cytoplasm. The protein localises to the mitochondrion intermembrane space. In terms of biological role, component of the cytosolic iron-sulfur (Fe-S) protein assembly (CIA) machinery. Required for the maturation of extramitochondrial Fe-S proteins. Part of an electron transfer chain functioning in an early step of cytosolic Fe-S biogenesis, facilitating the de novo assembly of a [4Fe-4S] cluster on the cytosolic Fe-S scaffold complex. Electrons are transferred from NADPH via a FAD- and FMN-containing diflavin oxidoreductase. Together with the diflavin oxidoreductase, also required for the assembly of the diferric tyrosyl radical cofactor of ribonucleotide reductase (RNR), probably by providing electrons for reduction during radical cofactor maturation in the catalytic small subunit. This Theileria parva (East coast fever infection agent) protein is Anamorsin homolog.